The sequence spans 291 residues: Zinc transporter ZupT (291 aa).

The next 8 helical transmembrane spans lie at 8–28 (IFIA…GSII), 39–59 (VLSL…FMEI), 74–94 (HWAE…SLLI), 147–167 (GIFT…ATFI), 174–194 (TLGI…GLAV), 209–229 (FIYS…GALI), 233–253 (FIGD…MVFI), and 271–291 (SLYG…LLGQ). 2 residues coordinate Fe(2+): asparagine 158 and glutamate 161. Positions 161 and 186 each coordinate Zn(2+). Positions 187, 190, and 219 each coordinate Fe(2+). Position 190 (glutamate 190) interacts with Zn(2+).

The protein belongs to the ZIP transporter (TC 2.A.5) family. ZupT subfamily.

Its subcellular location is the cell inner membrane. It carries out the reaction Zn(2+)(in) = Zn(2+)(out). Mediates zinc uptake. May also transport other divalent cations. The chain is Zinc transporter ZupT from Campylobacter jejuni subsp. jejuni serotype O:2 (strain ATCC 700819 / NCTC 11168).